The primary structure comprises 723 residues: Fatty acid oxidation complex subunit alpha (723 aa).

Positions 1-189 (MIYQADTLQV…KIGLLDAVVE (189 aa)) are enoyl-CoA hydratase/isomerase. Position 296 (Asp296) interacts with substrate. Residues 311 to 723 (SKDTERAAVL…FYGAQQQGSI (413 aa)) are 3-hydroxyacyl-CoA dehydrogenase. NAD(+) is bound by residues Met325, Asp344, 401–403 (VVE), Lys408, and Ser430. The For 3-hydroxyacyl-CoA dehydrogenase activity role is filled by His451. Asn454 provides a ligand contact to NAD(+). Substrate-binding residues include Asn501 and Tyr661.

It in the N-terminal section; belongs to the enoyl-CoA hydratase/isomerase family. This sequence in the C-terminal section; belongs to the 3-hydroxyacyl-CoA dehydrogenase family. Heterotetramer of two alpha chains (FadB) and two beta chains (FadA).

The enzyme catalyses a (3S)-3-hydroxyacyl-CoA + NAD(+) = a 3-oxoacyl-CoA + NADH + H(+). It carries out the reaction a (3S)-3-hydroxyacyl-CoA = a (2E)-enoyl-CoA + H2O. The catalysed reaction is a 4-saturated-(3S)-3-hydroxyacyl-CoA = a (3E)-enoyl-CoA + H2O. It catalyses the reaction (3S)-3-hydroxybutanoyl-CoA = (3R)-3-hydroxybutanoyl-CoA. The enzyme catalyses a (3Z)-enoyl-CoA = a 4-saturated (2E)-enoyl-CoA. It carries out the reaction a (3E)-enoyl-CoA = a 4-saturated (2E)-enoyl-CoA. It participates in lipid metabolism; fatty acid beta-oxidation. In terms of biological role, involved in the aerobic and anaerobic degradation of long-chain fatty acids via beta-oxidation cycle. Catalyzes the formation of 3-oxoacyl-CoA from enoyl-CoA via L-3-hydroxyacyl-CoA. It can also use D-3-hydroxyacyl-CoA and cis-3-enoyl-CoA as substrate. This chain is Fatty acid oxidation complex subunit alpha, found in Vibrio parahaemolyticus serotype O3:K6 (strain RIMD 2210633).